The following is an 880-amino-acid chain: Potassium/sodium hyperpolarization-activated cyclic nucleotide-gated channel 1 (880 aa).

Residues 1 to 80 (MEGGGKPNSS…SAGGLEDAEG (80 aa)) are disordered. Residues 1–136 (MEGGGKPNSS…WIIHSYSDFR (136 aa)) lie on the Cytoplasmic side of the membrane. The segment covering 8-34 (NSSSNSRDDGNSVFPAKAPATGAGPAA) has biased composition (low complexity). Over residues 62–71 (DGGGGGGEES) the composition is skewed to gly residues. Residues 137–158 (FYWDLIMLIMMVGNLVIIPVGI) traverse the membrane as a helical segment. Residues 159–167 (TFFTEQTTT) are Extracellular-facing. The chain crosses the membrane as a helical span at residues 168–188 (PWIIFNVASDTVFLLDLIMNF). Over 189-209 (RTGTVNEDSSEIILDPKVIKM) the chain is Cytoplasmic. A helical transmembrane segment spans residues 210–230 (NYLKSWFVVDFISSIPVDYIF). The Extracellular segment spans residues 231-254 (LIVEKGMDSEVYKTARALRIVRFT). Residues 255-275 (KILSLLRLLRLSRLIRYIHQW) traverse the membrane as a helical; Voltage-sensor segment. Residues 276–289 (EEIFHMTYDLASAV) lie on the Cytoplasmic side of the membrane. Residues 290–312 (VRIFNLIGMMLLLCHWDGCLQFL) traverse the membrane as a helical segment. Residues 313–338 (VPLLQDFPPDCWVSLNEMVNDSWGKQ) lie on the Extracellular side of the membrane. The N-linked (GlcNAc...) asparagine glycan is linked to N332. The segment at residues 339–360 (YSYALFKAMSHMLCIGYGAQAP) is an intramembrane region (pore-forming). The Selectivity filter signature appears at 352–356 (CIGYG). The Extracellular segment spans residues 361-365 (VSMSD). A helical membrane pass occupies residues 366–386 (LWITMLSMIVGATCYAMFVGH). The Cytoplasmic portion of the chain corresponds to 387–880 (ATALIQSLDS…AEKPRFASNL (494 aa)). Residues G533, E534, C536, R543, T544, R584, and R587 each contribute to the 3',5'-cyclic AMP site. Residues 641-664 (LNSTSSTATPTSRMRTQSPPVYTA) are compositionally biased toward polar residues. Disordered stretches follow at residues 641–686 (LNST…QPSA), 718–786 (ASQL…LPHE), and 835–880 (MSSG…ASNL). 2 stretches are compositionally biased toward low complexity: residues 665-685 (TSLS…PQPS) and 725-738 (PQQQ…QTQP). The span at 760-770 (STQALPNTSLT) shows a compositional bias: polar residues. The span at 844-855 (RGVPPAPPPPAA) shows a compositional bias: pro residues. Residues 870–880 (EAEKPRFASNL) show a composition bias toward basic and acidic residues.

Belongs to the potassium channel HCN family. In terms of assembly, homotetramer. Heterotetramer with HCN2. The potassium channel is composed of a homo- or heterotetrameric complex of pore-forming subunits. Interacts with KCNE2. Interacts with the SH3 domain of CSK. Detected in myocytes in heart sinoatrial node (SAN) and in brain, in particular in the granule cell layer and in Purkinje neuron bodies in the cerebellum.

The protein resides in the cell membrane. The enzyme catalyses Na(+)(in) = Na(+)(out). The catalysed reaction is K(+)(in) = K(+)(out). With respect to regulation, activated by cAMP. cAMP binding promotes tetramerization and formation of an active channel. Compared to other family members, cAMP has less stimulatory effect on HCN1 because part of the molecules already contain bound cAMP and form homotetramers when cAMP levels are low, this inherent tetramerization in HCN1 results in a weaker response to increased cAMP. Its function is as follows. Hyperpolarization-activated ion channel that are permeable to sodium and potassium ions. Exhibits weak selectivity for potassium over sodium ions. Contributes to the native pacemaker currents in heart (If) and in neurons (Ih). Participates in cerebellar mechanisms of motor learning. May mediate responses to sour stimuli. In Oryctolagus cuniculus (Rabbit), this protein is Potassium/sodium hyperpolarization-activated cyclic nucleotide-gated channel 1 (HCN1).